Consider the following 466-residue polypeptide: Glycylpeptide N-tetradecanoyltransferase (466 aa).

The disordered stretch occupies residues 1-21 (MDNENNKNTKNSQQDSSFSEG). Residues 8 to 19 (NTKNSQQDSSFS) are compositionally biased toward polar residues. Serine 17 carries the post-translational modification Phosphoserine. Tetradecanoyl-CoA is bound by residues 51-54 (FKFW), 185-187 (LCI), and 193-197 (SKRLT). Isoleucine 466 serves as the catalytic Proton acceptor; via carboxylate.

It belongs to the NMT family. As to quaternary structure, monomer.

Its subcellular location is the cytoplasm. The enzyme catalyses N-terminal glycyl-[protein] + tetradecanoyl-CoA = N-tetradecanoylglycyl-[protein] + CoA + H(+). Adds a myristoyl group to the N-terminal glycine residue of certain cellular proteins. This is Glycylpeptide N-tetradecanoyltransferase (nmt1) from Schizosaccharomyces pombe (strain 972 / ATCC 24843) (Fission yeast).